A 397-amino-acid polypeptide reads, in one-letter code: Protein Brevis radix-like 1 (397 aa).

2 disordered regions span residues 14 to 37 (GAPP…AGEC) and 105 to 148 (RAGS…EDDE). Acidic residues predominate over residues 124–148 (AGDEEEEEEEEEEEGTTADGSEDDE). The BRX 1 domain maps to 150–205 (KEWVAQVEPGVLITFLSLPEGGNDLKRIRFSREIFNKWQAQRWWAENYEKVMELYN). Disordered regions lie at residues 212–278 (QTPL…QQHH) and 300–342 (SISG…DQER). Over residues 220–230 (KSEDESLKEDI) the composition is skewed to basic and acidic residues. The segment covering 309–320 (SSMDASMRSSSS) has biased composition (low complexity). A BRX 2 domain is found at 342–397 (REWVEEDEPGVYITIRALPGGIRELRRVRFSREKFSEMHARLWWEENRARIHDQYL).

It belongs to the BRX family.

The protein resides in the nucleus. This chain is Protein Brevis radix-like 1 (BRXL1), found in Oryza sativa subsp. japonica (Rice).